The chain runs to 258 residues: Alcohol dehydrogenase 2 (258 aa).

9-33 (IFVGGLGFIGYEACKQLMAKNMASF) provides a ligand contact to NAD(+). Ser-137 is a binding site for substrate. Tyr-150 serves as the catalytic Proton acceptor.

The protein belongs to the short-chain dehydrogenases/reductases (SDR) family. In terms of assembly, homodimer.

It catalyses the reaction a primary alcohol + NAD(+) = an aldehyde + NADH + H(+). The enzyme catalyses a secondary alcohol + NAD(+) = a ketone + NADH + H(+). This Ceratitis cosyra (Mango fruit fly) protein is Alcohol dehydrogenase 2 (ADH2).